A 179-amino-acid chain; its full sequence is MLSYFKELSLRRPAWLLLATLACTLEVTGLYFQHKLGLIPCVMCIYERVALTGLLIAGLIALIAPNFFLFRWLALVLWGFSAFKGLSLSIKHYDYQANPSPWNQCEFKPQFPQTIPLDEWFPNIFAAGTVNCSEKQWQMLGWGMPEWLIVAFSLFMLFFLIVFMSQFKRAKPQYRSVFR.

The Cytoplasmic portion of the chain corresponds to 1–14 (MLSYFKELSLRRPA). The helical transmembrane segment at 15 to 31 (WLLLATLACTLEVTGLY) threads the bilayer. Residues 32 to 49 (FQHKLGLIPCVMCIYERV) lie on the Periplasmic side of the membrane. A disulfide bridge connects residues Cys41 and Cys44. A helical membrane pass occupies residues 50–65 (ALTGLLIAGLIALIAP). The Cytoplasmic segment spans residues 66–72 (NFFLFRW). The chain crosses the membrane as a helical span at residues 73–90 (LALVLWGFSAFKGLSLSI). The Periplasmic segment spans residues 91–146 (KHYDYQANPSPWNQCEFKPQFPQTIPLDEWFPNIFAAGTVNCSEKQWQMLGWGMPE). An intrachain disulfide couples Cys105 to Cys132. The helical transmembrane segment at 147 to 165 (WLIVAFSLFMLFFLIVFMS) threads the bilayer. Topologically, residues 166–179 (QFKRAKPQYRSVFR) are cytoplasmic.

It belongs to the DsbB family.

Its subcellular location is the cell inner membrane. Its function is as follows. Required for disulfide bond formation in some periplasmic proteins. Acts by oxidizing the DsbA protein. The polypeptide is Disulfide bond formation protein B (Haemophilus ducreyi (strain 35000HP / ATCC 700724)).